The primary structure comprises 236 residues: Phosphoribosylaminoimidazole-succinocarboxamide synthase (236 aa).

The protein belongs to the SAICAR synthetase family.

It catalyses the reaction 5-amino-1-(5-phospho-D-ribosyl)imidazole-4-carboxylate + L-aspartate + ATP = (2S)-2-[5-amino-1-(5-phospho-beta-D-ribosyl)imidazole-4-carboxamido]succinate + ADP + phosphate + 2 H(+). Its pathway is purine metabolism; IMP biosynthesis via de novo pathway; 5-amino-1-(5-phospho-D-ribosyl)imidazole-4-carboxamide from 5-amino-1-(5-phospho-D-ribosyl)imidazole-4-carboxylate: step 1/2. The chain is Phosphoribosylaminoimidazole-succinocarboxamide synthase from Campylobacter jejuni subsp. jejuni serotype O:6 (strain 81116 / NCTC 11828).